The primary structure comprises 168 residues: MYFSHQNRAHGSRRLAKETADALAQAETRGLISEVMYNEDQPRMTQMVLLPLLQQLGLQSRWQLWLTPQQRLSREWVESAGLPLTKVMQVSQMNPQVTLDSMIRALETGNYSVVIAWLHDDLTDDEHRRLTEAAEKGNAMGFLMRPVQPSLPGDRPRSGLRIHSRMVH.

A ftsZ binding region spans residues 105–111 (ALETGNY). The segment at 161–168 (RIHSRMVH) is lon protease binding.

Belongs to the SulA family. In terms of assembly, interacts with FtsZ. Post-translationally, is rapidly cleaved and degraded by the Lon protease once DNA damage is repaired.

Its function is as follows. Component of the SOS system and an inhibitor of cell division. Accumulation of SulA causes rapid cessation of cell division and the appearance of long, non-septate filaments. In the presence of GTP, binds a polymerization-competent form of FtsZ in a 1:1 ratio, thus inhibiting FtsZ polymerization and therefore preventing it from participating in the assembly of the Z ring. This mechanism prevents the premature segregation of damaged DNA to daughter cells during cell division. This Cronobacter turicensis (strain DSM 18703 / CCUG 55852 / LMG 23827 / z3032) protein is Cell division inhibitor SulA.